A 219-amino-acid chain; its full sequence is MASLKSIIRQGKQTRSDLKQLRNSGKVPAVVYGYGTKNTSVKVDEVEFIKVIREVGRNGVIDLGVGSKTIKVMVSDYQFDPLKNQITHIDFLAINMSEERTVEVQVQLVGEAVGAKEGGVVEQPLFNLEVTATPENIPETIEVDISELQVNDSLAVSDIKISGDFTIENNPEDSIVTVVPPTDEPSEEEVEAMEGESATEEPEVVGEDKEDDEEENKED.

The segment at 176 to 219 (VTVVPPTDEPSEEEVEAMEGESATEEPEVVGEDKEDDEEENKED) is disordered. Residues 184–219 (EPSEEEVEAMEGESATEEPEVVGEDKEDDEEENKED) show a composition bias toward acidic residues.

This sequence belongs to the bacterial ribosomal protein bL25 family. CTC subfamily. Part of the 50S ribosomal subunit; part of the 5S rRNA/L5/L18/L25 subcomplex. Contacts the 5S rRNA. Binds to the 5S rRNA independently of L5 and L18.

Functionally, this is one of the proteins that binds to the 5S RNA in the ribosome where it forms part of the central protuberance. This Staphylococcus epidermidis (strain ATCC 35984 / DSM 28319 / BCRC 17069 / CCUG 31568 / BM 3577 / RP62A) protein is Large ribosomal subunit protein bL25.